We begin with the raw amino-acid sequence, 157 residues long: Protein-export protein SecB (157 aa).

This sequence belongs to the SecB family. As to quaternary structure, homotetramer, a dimer of dimers. One homotetramer interacts with 1 SecA dimer.

It localises to the cytoplasm. In terms of biological role, one of the proteins required for the normal export of preproteins out of the cell cytoplasm. It is a molecular chaperone that binds to a subset of precursor proteins, maintaining them in a translocation-competent state. It also specifically binds to its receptor SecA. This Magnetococcus marinus (strain ATCC BAA-1437 / JCM 17883 / MC-1) protein is Protein-export protein SecB.